The following is a 326-amino-acid chain: Fos-related antigen 2 (326 aa).

Met-1 bears the N-acetylmethionine mark. The segment at 1–39 is disordered; the sequence is MYQDYPGNFDTSSRGSSGSPAHAESYSSGGGGQQKFRVD. Polar residues predominate over residues 9 to 19; it reads FDTSSRGSSGS. Residue Lys-35 forms a Glycyl lysine isopeptide (Lys-Gly) (interchain with G-Cter in SUMO2) linkage. Lys-104 carries the N6-acetyllysine; alternate modification. Lys-104 participates in a covalent cross-link: Glycyl lysine isopeptide (Lys-Gly) (interchain with G-Cter in SUMO2); alternate. Disordered stretches follow at residues 111 to 131, 193 to 244, and 289 to 326; these read GRRRRDEQLSPEEEEKRRIRR, ISPE…QRSV, and EQESPASPSESCSKAHRRSSSSGDQSSDSLNSPTLLAL. Ser-120 is subject to Phosphoserine. The 64-residue stretch at 124 to 187 folds into the bZIP domain; that stretch reads EEKRRIRRER…EKLEFMLVAH (64 aa). Residues 126-128 are basic motif; the sequence is KRR. The interval 129 to 136 is leucine-zipper; that stretch reads IRRERNKL. A Phosphoserine modification is found at Ser-200. Residues 201–211 are compositionally biased toward polar residues; sequence PPTSGLQSLRG. Lys-222 participates in a covalent cross-link: Glycyl lysine isopeptide (Lys-Gly) (interchain with G-Cter in SUMO2); alternate. Lys-222 participates in a covalent cross-link: Glycyl lysine isopeptide (Lys-Gly) (interchain with G-Cter in SUMO1); alternate. Position 230 is a phosphoserine (Ser-230). Lys-239 participates in a covalent cross-link: Glycyl lysine isopeptide (Lys-Gly) (interchain with G-Cter in SUMO2). Ser-308 and Ser-320 each carry phosphoserine. The span at 308-320 shows a compositional bias: low complexity; the sequence is SSSGDQSSDSLNS.

Belongs to the bZIP family. Fos subfamily. As to quaternary structure, heterodimer. Interacts with the BAF multiprotein chromatin-remodeling complex subunits SMARCB1 and SMARCD1. Interacts with ARID1A and JUN. In terms of tissue distribution, expressed in the brain cortex. Expressed at night in pineal gland (at protein level). Also expressed in osteoblasts (at protein level).

Its subcellular location is the nucleus. Functionally, controls osteoclast survival and size. As a dimer with JUN, activates LIF transcription. Activates CEBPB transcription in PGE2-activated osteoblasts. This Rattus norvegicus (Rat) protein is Fos-related antigen 2 (Fosl2).